Here is a 39-residue protein sequence, read N- to C-terminus: Cytochrome b559 subunit beta (39 aa).

The helical transmembrane segment at 14 to 30 (WLAIHGLAVPTVFFLGS) threads the bilayer. His18 is a heme binding site.

The protein belongs to the PsbE/PsbF family. Heterodimer of an alpha subunit and a beta subunit. PSII is composed of 1 copy each of membrane proteins PsbA, PsbB, PsbC, PsbD, PsbE, PsbF, PsbH, PsbI, PsbJ, PsbK, PsbL, PsbM, PsbT, PsbX, PsbY, PsbZ, Psb30/Ycf12, at least 3 peripheral proteins of the oxygen-evolving complex and a large number of cofactors. It forms dimeric complexes. The cofactor is heme b.

The protein localises to the plastid. The protein resides in the chloroplast thylakoid membrane. This b-type cytochrome is tightly associated with the reaction center of photosystem II (PSII). PSII is a light-driven water:plastoquinone oxidoreductase that uses light energy to abstract electrons from H(2)O, generating O(2) and a proton gradient subsequently used for ATP formation. It consists of a core antenna complex that captures photons, and an electron transfer chain that converts photonic excitation into a charge separation. This chain is Cytochrome b559 subunit beta, found in Psilotum nudum (Whisk fern).